Consider the following 363-residue polypeptide: Phosphoserine aminotransferase (363 aa).

R42 is a binding site for L-glutamate. Residues 76–77 (GR), W102, T156, D175, and Q198 contribute to the pyridoxal 5'-phosphate site. Residue K199 is modified to N6-(pyridoxal phosphate)lysine. 240–241 (NT) is a pyridoxal 5'-phosphate binding site.

The protein belongs to the class-V pyridoxal-phosphate-dependent aminotransferase family. SerC subfamily. Homodimer. Pyridoxal 5'-phosphate serves as cofactor.

The protein resides in the cytoplasm. It catalyses the reaction O-phospho-L-serine + 2-oxoglutarate = 3-phosphooxypyruvate + L-glutamate. It carries out the reaction 4-(phosphooxy)-L-threonine + 2-oxoglutarate = (R)-3-hydroxy-2-oxo-4-phosphooxybutanoate + L-glutamate. It participates in amino-acid biosynthesis; L-serine biosynthesis; L-serine from 3-phospho-D-glycerate: step 2/3. It functions in the pathway cofactor biosynthesis; pyridoxine 5'-phosphate biosynthesis; pyridoxine 5'-phosphate from D-erythrose 4-phosphate: step 3/5. Catalyzes the reversible conversion of 3-phosphohydroxypyruvate to phosphoserine and of 3-hydroxy-2-oxo-4-phosphonooxybutanoate to phosphohydroxythreonine. This is Phosphoserine aminotransferase from Shewanella halifaxensis (strain HAW-EB4).